The sequence spans 642 residues: Threonine--tRNA ligase (642 aa).

The TGS domain occupies 1–61 (MPVITLPDGS…ETDAELSIIT (61 aa)). The catalytic stretch occupies residues 243–534 (DHRKIGKQLD…LIEEYAGRFP (292 aa)). Residues Cys334, His385, and His511 each coordinate Zn(2+).

The protein belongs to the class-II aminoacyl-tRNA synthetase family. In terms of assembly, homodimer. Requires Zn(2+) as cofactor.

Its subcellular location is the cytoplasm. It carries out the reaction tRNA(Thr) + L-threonine + ATP = L-threonyl-tRNA(Thr) + AMP + diphosphate + H(+). Functionally, catalyzes the attachment of threonine to tRNA(Thr) in a two-step reaction: L-threonine is first activated by ATP to form Thr-AMP and then transferred to the acceptor end of tRNA(Thr). Also edits incorrectly charged L-seryl-tRNA(Thr). In Shewanella sp. (strain ANA-3), this protein is Threonine--tRNA ligase.